We begin with the raw amino-acid sequence, 366 residues long: tRNA-specific 2-thiouridylase MnmA (366 aa).

Residues 6–13 and Met32 contribute to the ATP site; that span reads GLSGGVDS. Cys96 functions as the Nucleophile in the catalytic mechanism. Residues Cys96 and Cys196 are joined by a disulfide bond. Gly120 lines the ATP pocket. Residues 146-148 form an interaction with tRNA region; sequence KDQ. The active-site Cysteine persulfide intermediate is the Cys196. Residues 302–303 are interaction with tRNA; it reads RY.

The protein belongs to the MnmA/TRMU family.

The protein localises to the cytoplasm. The enzyme catalyses S-sulfanyl-L-cysteinyl-[protein] + uridine(34) in tRNA + AH2 + ATP = 2-thiouridine(34) in tRNA + L-cysteinyl-[protein] + A + AMP + diphosphate + H(+). Catalyzes the 2-thiolation of uridine at the wobble position (U34) of tRNA, leading to the formation of s(2)U34. The chain is tRNA-specific 2-thiouridylase MnmA from Treponema denticola (strain ATCC 35405 / DSM 14222 / CIP 103919 / JCM 8153 / KCTC 15104).